Here is a 421-residue protein sequence, read N- to C-terminus: Monopolin complex subunit mde4 (421 aa).

Disordered stretches follow at residues Gln122–Glu158 and Asp224–Ser316. A compositionally biased stretch (polar residues) spans Val133–Ser149. The span at Asp224 to Ser238 shows a compositional bias: basic and acidic residues. The segment covering Arg262–Leu287 has biased composition (polar residues). A compositionally biased stretch (low complexity) spans Ser288–Phe304.

In terms of assembly, component of a monopolin-like complex composed of pcs1 and mde4. The complex associates with the kinetochore.

It localises to the nucleus. The protein resides in the chromosome. Its subcellular location is the centromere. In terms of biological role, the monopolin-like pcs1/mde4 complex is essential for accurate chromosome segregation during mitosis and meiosis II. May clamp together microtubule binding sites on the same kinetochore, preventing merotelic attachment of microtubules. This chain is Monopolin complex subunit mde4 (mde4), found in Schizosaccharomyces pombe (strain 972 / ATCC 24843) (Fission yeast).